Reading from the N-terminus, the 54-residue chain is Large ribosomal subunit protein bL33 (54 aa).

Belongs to the bacterial ribosomal protein bL33 family.

This is Large ribosomal subunit protein bL33 from Xylella fastidiosa (strain M23).